The chain runs to 345 residues: Phosphoribosylformylglycinamidine cyclo-ligase (345 aa).

The protein belongs to the AIR synthase family.

The protein localises to the cytoplasm. It catalyses the reaction 2-formamido-N(1)-(5-O-phospho-beta-D-ribosyl)acetamidine + ATP = 5-amino-1-(5-phospho-beta-D-ribosyl)imidazole + ADP + phosphate + H(+). Its pathway is purine metabolism; IMP biosynthesis via de novo pathway; 5-amino-1-(5-phospho-D-ribosyl)imidazole from N(2)-formyl-N(1)-(5-phospho-D-ribosyl)glycinamide: step 2/2. This Shewanella denitrificans (strain OS217 / ATCC BAA-1090 / DSM 15013) protein is Phosphoribosylformylglycinamidine cyclo-ligase.